The chain runs to 79 residues: Acyl carrier protein (79 aa).

Positions E2 to L77 constitute a Carrier domain. O-(pantetheine 4'-phosphoryl)serine is present on S37.

The protein belongs to the acyl carrier protein (ACP) family. Post-translationally, 4'-phosphopantetheine is transferred from CoA to a specific serine of apo-ACP by AcpS. This modification is essential for activity because fatty acids are bound in thioester linkage to the sulfhydryl of the prosthetic group.

It localises to the cytoplasm. It functions in the pathway lipid metabolism; fatty acid biosynthesis. In terms of biological role, carrier of the growing fatty acid chain in fatty acid biosynthesis. The sequence is that of Acyl carrier protein from Laribacter hongkongensis (strain HLHK9).